A 357-amino-acid polypeptide reads, in one-letter code: SrfA-induced gene J protein (357 aa).

The tract at residues 1–29 is disordered; that stretch reads MGRVEDQIKDNYNSLSHEGERLNREAKIE. Positions 5–51 form a coiled coil; sequence EDQIKDNYNSLSHEGERLNREAKIESEKLKNNAKLDAKDMKKDIDES. The segment covering 17–29 has biased composition (basic and acidic residues); that stretch reads HEGERLNREAKIE. N-linked (GlcNAc...) asparagine glycans are attached at residues Asn114, Asn157, and Asn172. Coiled coils occupy residues 150-177 and 223-270; these read KNFK…SNKI and DETK…DAIE. The chain crosses the membrane as a helical span at residues 290–307; it reads IWGSIGLIGGATATSYLF.

It is found in the membrane. This Dictyostelium discoideum (Social amoeba) protein is SrfA-induced gene J protein (sigJ).